A 96-amino-acid chain; its full sequence is Methanol dehydrogenase [cytochrome c] subunit 2 (96 aa).

The N-terminal stretch at 1-22 (MKTTLIAAAIVALSGLAAPALA) is a signal peptide. Residues cysteine 28 and cysteine 34 are joined by a disulfide bond. A disordered region spans residues 45–75 (IAGSKYDPKHDPKELNKQADSIKQMEERNKK). Basic and acidic residues predominate over residues 50 to 61 (YDPKHDPKELNK).

The protein belongs to the methanol dehydrogenase subunit 2 family. Heterotetramer composed of 2 alpha and 2 beta subunits.

It localises to the periplasm. It catalyses the reaction 2 Fe(III)-[cytochrome cL] + a primary alcohol = 2 Fe(II)-[cytochrome cL] + an aldehyde + 2 H(+). Functionally, catalyzes the oxidation of primary alcohols including methanol. The sequence is that of Methanol dehydrogenase [cytochrome c] subunit 2 (moxI) from Methylorubrum extorquens (strain ATCC 14718 / DSM 1338 / JCM 2805 / NCIMB 9133 / AM1) (Methylobacterium extorquens).